The following is an 828-amino-acid chain: Periplasmic nitrate reductase (828 aa).

Residues 1-31 (MKLSRRSFMKANAVAAAAAAAGLSVPGVARA) constitute a signal peptide (tat-type signal). One can recognise a 4Fe-4S Mo/W bis-MGD-type domain in the interval 39–95 (IKWDKAPCRFCGTGCGVLVGTQQGRIVACQGDPDAPVNRGLNCIKGYFLPKIMYGKD). 4 residues coordinate [4Fe-4S] cluster: Cys46, Cys49, Cys53, and Cys81. Mo-bis(molybdopterin guanine dinucleotide) is bound by residues Lys83, Gln150, Asn175, Cys179, 212-219 (WGSNMAEM), 243-247 (STFQH), 262-264 (QSD), Met372, Gln376, Asn482, 508-509 (SD), Lys531, Asp558, and 718-727 (TGRVLEHWHT). Phe794 lines the substrate pocket. Residues Asn802 and Lys819 each contribute to the Mo-bis(molybdopterin guanine dinucleotide) site.

It belongs to the prokaryotic molybdopterin-containing oxidoreductase family. NasA/NapA/NarB subfamily. As to quaternary structure, component of the periplasmic nitrate reductase NapAB complex composed of NapA and NapB. Requires [4Fe-4S] cluster as cofactor. The cofactor is Mo-bis(molybdopterin guanine dinucleotide). In terms of processing, predicted to be exported by the Tat system. The position of the signal peptide cleavage has not been experimentally proven.

Its subcellular location is the periplasm. The catalysed reaction is 2 Fe(II)-[cytochrome] + nitrate + 2 H(+) = 2 Fe(III)-[cytochrome] + nitrite + H2O. Functionally, catalytic subunit of the periplasmic nitrate reductase complex NapAB. Receives electrons from NapB and catalyzes the reduction of nitrate to nitrite. This chain is Periplasmic nitrate reductase, found in Citrobacter koseri (strain ATCC BAA-895 / CDC 4225-83 / SGSC4696).